The sequence spans 128 residues: Nucleoside diphosphate kinase B (128 aa).

At Met1 the chain carries N-acetylmethionine. The ATP site is built by Lys9, Phe39, Thr70, Arg81, and Asn91. Residue His94 is the Pros-phosphohistidine intermediate of the active site.

This sequence belongs to the NDK family. It depends on Mg(2+) as a cofactor.

The protein resides in the cytoplasm. The protein localises to the nucleus. It localises to the cell projection. Its subcellular location is the lamellipodium. It is found in the ruffle. It catalyses the reaction a 2'-deoxyribonucleoside 5'-diphosphate + ATP = a 2'-deoxyribonucleoside 5'-triphosphate + ADP. The enzyme catalyses a ribonucleoside 5'-diphosphate + ATP = a ribonucleoside 5'-triphosphate + ADP. In terms of biological role, major role in the synthesis of nucleoside triphosphates other than ATP. The polypeptide is Nucleoside diphosphate kinase B (nme2) (Merluccius bilinearis (Silver hake)).